Here is a 94-residue protein sequence, read N- to C-terminus: Large ribosomal subunit protein bL27 (94 aa).

A propeptide spanning residues 1–9 (MLKLNLQFF) is cleaved from the precursor.

The protein belongs to the bacterial ribosomal protein bL27 family. Post-translationally, the N-terminus is cleaved by ribosomal processing cysteine protease Prp.

In Staphylococcus epidermidis (strain ATCC 35984 / DSM 28319 / BCRC 17069 / CCUG 31568 / BM 3577 / RP62A), this protein is Large ribosomal subunit protein bL27.